Reading from the N-terminus, the 274-residue chain is Large ribosomal subunit protein uL2cz/uL2cy (274 aa).

Disordered regions lie at residues 1-21 (MAIH…VDSQ) and 225-254 (PVDH…PALG).

It belongs to the universal ribosomal protein uL2 family. Part of the 50S ribosomal subunit.

It localises to the plastid. The protein localises to the chloroplast. This Draba nemorosa (Woodland whitlowgrass) protein is Large ribosomal subunit protein uL2cz/uL2cy (rpl2-A).